A 291-amino-acid chain; its full sequence is Protease HtpX (291 aa).

2 consecutive transmembrane segments (helical) span residues 4–24 (IILF…ILSF) and 32–52 (ISGL…ISLL). His-139 contributes to the Zn(2+) binding site. Glu-140 is a catalytic residue. Residue His-143 coordinates Zn(2+). 2 helical membrane-spanning segments follow: residues 158–178 (IVNT…SSIL) and 192–212 (WVYI…ASII). Glu-221 contributes to the Zn(2+) binding site.

It belongs to the peptidase M48B family. It depends on Zn(2+) as a cofactor.

The protein localises to the cell membrane. The polypeptide is Protease HtpX (Buchnera aphidicola subsp. Baizongia pistaciae (strain Bp)).